The sequence spans 303 residues: T-box protein 38 (303 aa).

Positions Leu-14–Ser-195 form a DNA-binding region, T-box. The tract at residues Phe-193 to Ser-225 is disordered. Positions Asp-204–Pro-213 are enriched in low complexity.

It localises to the nucleus. Transcription factor. Required for mesodermal induction, acting redundantly with transcription factor tbx-37. Together with tbx-37, acts by inducing cell fates in the AB lineage, thereby playing a role in development of the anterior pharynx. In Caenorhabditis elegans, this protein is T-box protein 38 (tbx-38).